A 315-amino-acid chain; its full sequence is Voltage-dependent calcium channel gamma-3 subunit (315 aa).

4 helical membrane passes run 8-28 (IQMLITTVGAFAAFSLMTIAV), 104-124 (SSVFPILSVTLLFFGGLCVAA), 135-155 (ILSAGIFFVSAGLSNIIGIIV), and 181-201 (FGAFSFIIAEIVGVVAVHIYI). Ser-248 is subject to Phosphoserine.

It belongs to the PMP-22/EMP/MP20 family. CACNG subfamily. The L-type calcium channel is composed of five subunits: alpha-1, alpha-2/delta, beta and gamma. Acts as an auxiliary subunit for AMPA-selective glutamate receptors (AMPARs). Found in a complex with GRIA1, GRIA2, GRIA3, GRIA4, CNIH2, CNIH3, CACNG2, CACNG4, CACNG5, CACNG7 and CACNG8. Interacts with AP4M1 and GRIA1; associates GRIA1 with the adaptor protein complex 4 (AP-4) to target GRIA1 to the somatodendritic compartment of neurons.

Its subcellular location is the membrane. In terms of biological role, regulates the trafficking to the somatodendritic compartment and gating properties of AMPA-selective glutamate receptors (AMPARs). Promotes their targeting to the cell membrane and synapses and modulates their gating properties by slowing their rates of activation, deactivation and desensitization. Does not show subunit-specific AMPA receptor regulation and regulates all AMPAR subunits. Thought to stabilize the calcium channel in an inactivated (closed) state. This chain is Voltage-dependent calcium channel gamma-3 subunit (CACNG3), found in Homo sapiens (Human).